The following is an 86-amino-acid chain: uncharacterized protein (86 aa).

To C.jejuni CJ0253.

This is an uncharacterized protein from Helicobacter pylori (strain ATCC 700392 / 26695) (Campylobacter pylori).